The chain runs to 290 residues: Glycine--tRNA ligase alpha subunit (290 aa).

Belongs to the class-II aminoacyl-tRNA synthetase family. In terms of assembly, tetramer of two alpha and two beta subunits.

Its subcellular location is the cytoplasm. It carries out the reaction tRNA(Gly) + glycine + ATP = glycyl-tRNA(Gly) + AMP + diphosphate. The protein is Glycine--tRNA ligase alpha subunit of Gloeobacter violaceus (strain ATCC 29082 / PCC 7421).